A 245-amino-acid polypeptide reads, in one-letter code: Hydrolase pyvD (245 aa).

Active-site residues include Cys-133, Asp-179, and His-211.

The protein belongs to the dienelactone hydrolase family.

It participates in secondary metabolite biosynthesis. In terms of biological role, hydrolase; part of the gene cluster that mediates the biosynthesis of pyranoviolin A, a pyranonigrin analog with a C-3 methoxy group. Initially, the PKS portion of pyvA synthesizes C-10 carbon chain from 5 molecules of malonyl-CoA, which is then condensed with the thiolation (T) domain-bound glycine activated by the adenylation (A) domain. The subsequent chain release by Dieckmann condensation (DKC) could be catalyzed by the TE domain present at the C-terminus of pyvA and/or the alpha/beta hydrolase pyvD, installing the tetramic acid moiety. The FAD-dependent monooxygenase pyvC next epoxidizes one of the olefins of the polyketide part, and the epoxide ring-opening induces the dihydro-gamma-pyrone ring formation. The cytochrome P450 monooxygeanse pyvB would be responsible for the 2 consecutive reactions, in which the dihydro-gamma-pyrone is oxidized to gamma-pyrone and C-7 is hydroxylated to yield pyranonigrin F. Finally, the O-methyltransferase pyvH methylates the C-3 hydroxy group to complete the biosynthesis. This chain is Hydrolase pyvD, found in Aspergillus violaceofuscus (strain CBS 115571).